Consider the following 196-residue polypeptide: Peptidyl-tRNA hydrolase (196 aa).

Tyr-18 serves as a coordination point for tRNA. Catalysis depends on His-23, which acts as the Proton acceptor. Phe-69, Asn-71, and Asn-117 together coordinate tRNA.

Belongs to the PTH family. In terms of assembly, monomer.

It is found in the cytoplasm. It catalyses the reaction an N-acyl-L-alpha-aminoacyl-tRNA + H2O = an N-acyl-L-amino acid + a tRNA + H(+). Functionally, hydrolyzes ribosome-free peptidyl-tRNAs (with 1 or more amino acids incorporated), which drop off the ribosome during protein synthesis, or as a result of ribosome stalling. Its function is as follows. Catalyzes the release of premature peptidyl moieties from peptidyl-tRNA molecules trapped in stalled 50S ribosomal subunits, and thus maintains levels of free tRNAs and 50S ribosomes. The sequence is that of Peptidyl-tRNA hydrolase from Aliivibrio fischeri (strain MJ11) (Vibrio fischeri).